We begin with the raw amino-acid sequence, 458 residues long: Glutamate--tRNA ligase 2 (458 aa).

Residues proline 20–asparagine 30 carry the 'HIGH' region motif. The short motif at glycine 251 to arginine 255 is the 'KMSKS' region element. Lysine 254 provides a ligand contact to ATP.

This sequence belongs to the class-I aminoacyl-tRNA synthetase family. Glutamate--tRNA ligase type 1 subfamily. In terms of assembly, monomer.

It is found in the cytoplasm. The enzyme catalyses tRNA(Glu) + L-glutamate + ATP = L-glutamyl-tRNA(Glu) + AMP + diphosphate. In terms of biological role, catalyzes the attachment of glutamate to tRNA(Glu) in a two-step reaction: glutamate is first activated by ATP to form Glu-AMP and then transferred to the acceptor end of tRNA(Glu). In Xanthobacter autotrophicus (strain ATCC BAA-1158 / Py2), this protein is Glutamate--tRNA ligase 2.